The following is a 277-amino-acid chain: Undecaprenyl-diphosphatase (277 aa).

6 helical membrane passes run 47 to 67, 85 to 105, 108 to 128, 187 to 207, 218 to 238, and 249 to 269; these read FNII…RGKI, ANLL…ADLI, WLFN…VMLW, FSFF…GYVY, VFAV…RALL, and FAWY…FHLI.

The protein belongs to the UppP family.

It is found in the cell inner membrane. The enzyme catalyses di-trans,octa-cis-undecaprenyl diphosphate + H2O = di-trans,octa-cis-undecaprenyl phosphate + phosphate + H(+). Catalyzes the dephosphorylation of undecaprenyl diphosphate (UPP). Confers resistance to bacitracin. The sequence is that of Undecaprenyl-diphosphatase from Pseudomonas aeruginosa (strain ATCC 15692 / DSM 22644 / CIP 104116 / JCM 14847 / LMG 12228 / 1C / PRS 101 / PAO1).